The following is a 250-amino-acid chain: Cyclin-Q (250 aa).

An N-acetylmethionine modification is found at methionine 1. The segment covering 1–10 has biased composition (basic and acidic residues); sequence MEAVRPDSCE. The disordered stretch occupies residues 1–22; that stretch reads MEAVRPDSCERGTAAARAEERP.

This sequence belongs to the cyclin family. Cyclin-like FAM58 subfamily. Associates with CDK10 to promote its kinase activity.

In terms of biological role, activating cyclin for the cyclin-associated kinase CDK10. This is Cyclin-Q (Ccnq) from Rattus norvegicus (Rat).